The primary structure comprises 942 residues: Protein inturned (942 aa).

2 disordered regions span residues 1-56 and 128-156; these read MAGL…PEWL and LPRR…KTGV. The segment covering 22-32 has biased composition (acidic residues); the sequence is SQEEEEEEGDS. Low complexity predominate over residues 33–48; it reads DAGASSLGSYSSASSD. Positions 137 to 156 are enriched in polar residues; it reads SSNNGPVSILKHQSSQKTGV. One can recognise a PDZ domain in the interval 185 to 267; the sequence is LLEVLVGIIH…PMQVKLTFEN (83 aa). 2 positions are modified to phosphoserine: S674 and S678. The tract at residues 707–751 is disordered; it reads KARKPSPSRIGGGREPTEGEESAGLSPHATPDAVRKQRESEGSDD.

It belongs to the inturned family. As to quaternary structure, component of the CPLANE (ciliogenesis and planar polarity effectors) complex, composed of INTU, FUZ and WDPCP. Interacts with CPLANE1. Interacts with NPHP4 and DAAM1; INTU is mediating the interaction between NPHP4 and DAAM1. Widely expressed in E8.5 and E9.5 wild type embryos. Present in various adult organs (at protein level).

It is found in the cytoplasm. The protein resides in the cell surface. The protein localises to the cytoskeleton. It localises to the cilium basal body. Its subcellular location is the microtubule organizing center. It is found in the centrosome. The protein resides in the centriole. Functionally, plays a key role in ciliogenesis and embryonic development. Regulator of cilia formation by controlling the organization of the apical actin cytoskeleton and the positioning of the basal bodies at the apical cell surface, which in turn is essential for the normal orientation of elongating ciliary microtubules. Plays a key role in definition of cell polarity via its role in ciliogenesis but not via conversion extension. Has an indirect effect on hedgehog signaling. Proposed to function as core component of the CPLANE (ciliogenesis and planar polarity effectors) complex involved in the recruitment of peripheral IFT-A proteins to basal bodies. Required for recruitment of CPLANE2 to the mother centriole. Binds phosphatidylinositol 3-phosphate with highest affinity, followed by phosphatidylinositol 4-phosphate and phosphatidylinositol 5-phosphate. This chain is Protein inturned (Intu), found in Mus musculus (Mouse).